We begin with the raw amino-acid sequence, 414 residues long: tRNA methyltransferase 10 homolog C (414 aa).

The transit peptide at 1–35 (MNVTVRFLRPFARYLVPYTFHRTRSNSYSRVLQRY) directs the protein to the mitochondrion. Residue Ser79 is modified to Phosphoserine. Residues 133-162 (GKEMMKKAKQMKKEMKAAAREEAKRARSLE) are a coiled coil. The region spanning 186 to 378 (LGWKGVQAMQ…KFVPRRKHTG (193 aa)) is the SAM-dependent MTase TRM10-type domain.

The protein belongs to the class IV-like SAM-binding methyltransferase superfamily. TRM10 family. Component of mitochondrial ribonuclease P, a complex composed of TRMT10C/MRPP1, HSD17B10/MRPP2 and PRORP/MRPP3. Interacts with HSD17B10/MRPP2; forming the MRPP1-MRPP2 subcomplex of the mitochondrial ribonuclease P complex. Interacts with GRSF1.

The protein localises to the mitochondrion matrix. It localises to the mitochondrion nucleoid. It catalyses the reaction adenosine(9) in tRNA + S-adenosyl-L-methionine = N(1)-methyladenosine(9) in tRNA + S-adenosyl-L-homocysteine + H(+). It carries out the reaction guanosine(9) in tRNA + S-adenosyl-L-methionine = N(1)-methylguanosine(9) in tRNA + S-adenosyl-L-homocysteine + H(+). The catalysed reaction is an adenosine in mRNA + S-adenosyl-L-methionine = an N(1)-methyladenosine in mRNA + S-adenosyl-L-homocysteine + H(+). Mitochondrial tRNA N(1)-methyltransferase involved in mitochondrial tRNA maturation. Component of mitochondrial ribonuclease P, a complex composed of TRMT10C/MRPP1, HSD17B10/MRPP2 and PRORP/MRPP3, which cleaves tRNA molecules in their 5'-ends. Together with HSD17B10/MRPP2, forms a subcomplex of the mitochondrial ribonuclease P, named MRPP1-MRPP2 subcomplex, which displays functions that are independent of the ribonuclease P activity. The MRPP1-MRPP2 subcomplex catalyzes the formation of N(1)-methylguanine and N(1)-methyladenine at position 9 (m1G9 and m1A9, respectively) in tRNAs; TRMT10C/MRPP1 acting as the catalytic N(1)-methyltransferase subunit. The MRPP1-MRPP2 subcomplex also acts as a tRNA maturation platform: following 5'-end cleavage by the mitochondrial ribonuclease P complex, the MRPP1-MRPP2 subcomplex enhances the efficiency of 3'-processing catalyzed by ELAC2, retains the tRNA product after ELAC2 processing and presents the nascent tRNA to the mitochondrial CCA tRNA nucleotidyltransferase TRNT1 enzyme. In addition to tRNA N(1)-methyltransferase activity, TRMT10C/MRPP1 also acts as a mRNA N(1)-methyltransferase by mediating methylation of adenosine residues at the N(1) position of MT-ND5 mRNA. Associates with mitochondrial DNA complexes at the nucleoids to initiate RNA processing and ribosome assembly. The polypeptide is tRNA methyltransferase 10 homolog C (Rattus norvegicus (Rat)).